The chain runs to 267 residues: uncharacterized protein (267 aa).

The stretch at 50–90 is one WD repeat; the sequence is PGLNAVTASKFSPDGRWLLNIADGSGYVQLWDTAKGERVKT.

This is an uncharacterized protein from Deinococcus radiodurans (strain ATCC 13939 / DSM 20539 / JCM 16871 / CCUG 27074 / LMG 4051 / NBRC 15346 / NCIMB 9279 / VKM B-1422 / R1).